A 345-amino-acid chain; its full sequence is MIKSKKILSLIIAGVLGVSMLTGCSQNDGSNASNENKKTDSKKQKNIGISQLVEHPSLDKAKKGFIKALEDKGYKDGDNIKIDFQNAQNDMPTTQSIASKFVSDKKDLIYAISTPSAQAAYNATKDIPIIMTAVTDPVEAGLVKSLEKPGGNVSGTSDYLSIDKTLELVKTLTPKAKKIGVIYNTSEVNSKIQVDSLHDYAKKNNYEVVEKGISTSSEVNQAISSLVGKIDVLYVPTDNLIVSSMPIVSKVANENKIPIIASEEGSVSSGALACCGIDYEKLGYKAGELAIEVLEGKSVGDIPVTTLDETEIIINEDTLKALDMQKLSADNIKYIKSDENAKSAK.

A signal peptide spans 1–23; sequence MIKSKKILSLIIAGVLGVSMLTG. C24 carries the N-palmitoyl cysteine lipid modification. Residue C24 is the site of S-diacylglycerol cysteine attachment.

As to quaternary structure, the complex is probably composed of two ATP-binding proteins (CDR20291_0806), two transmembrane proteins (CDR20291_0807) and a solute-binding protein (CDR20291_0805).

Its subcellular location is the cell membrane. Probably part of an ABC transporter complex involved in tyrosine uptake. May also import phenylalanine. In Clostridioides difficile (strain R20291) (Peptoclostridium difficile), this protein is Tyrosine-binding protein.